The chain runs to 282 residues: Pantothenate synthetase (282 aa).

30–37 (MGNLHQGH) is a binding site for ATP. Histidine 37 serves as the catalytic Proton donor. Glutamine 61 is a binding site for (R)-pantoate. Glutamine 61 serves as a coordination point for beta-alanine. 149-152 (GKKD) lines the ATP pocket. Glutamine 155 is a binding site for (R)-pantoate. ATP contacts are provided by residues isoleucine 178 and 186-189 (MSSR).

This sequence belongs to the pantothenate synthetase family. As to quaternary structure, homodimer.

Its subcellular location is the cytoplasm. The enzyme catalyses (R)-pantoate + beta-alanine + ATP = (R)-pantothenate + AMP + diphosphate + H(+). The protein operates within cofactor biosynthesis; (R)-pantothenate biosynthesis; (R)-pantothenate from (R)-pantoate and beta-alanine: step 1/1. Functionally, catalyzes the condensation of pantoate with beta-alanine in an ATP-dependent reaction via a pantoyl-adenylate intermediate. The sequence is that of Pantothenate synthetase from Shewanella loihica (strain ATCC BAA-1088 / PV-4).